Consider the following 348-residue polypeptide: UDP-glucose 4-epimerase (348 aa).

Thr-125 lines the substrate pocket. Tyr-149 functions as the Proton acceptor in the catalytic mechanism.

Belongs to the NAD(P)-dependent epimerase/dehydratase family. NAD(+) is required as a cofactor.

The enzyme catalyses UDP-alpha-D-glucose = UDP-alpha-D-galactose. Its pathway is carbohydrate metabolism; galactose metabolism. It functions in the pathway glycan metabolism; exopolysaccharide biosynthesis. The polypeptide is UDP-glucose 4-epimerase (exoB) (Azospirillum brasilense).